A 330-amino-acid chain; its full sequence is Ribosomal RNA small subunit methyltransferase C (330 aa).

Belongs to the methyltransferase superfamily. RsmC family. In terms of assembly, monomer.

It is found in the cytoplasm. It catalyses the reaction guanosine(1207) in 16S rRNA + S-adenosyl-L-methionine = N(2)-methylguanosine(1207) in 16S rRNA + S-adenosyl-L-homocysteine + H(+). In terms of biological role, specifically methylates the guanine in position 1207 of 16S rRNA in the 30S particle. The polypeptide is Ribosomal RNA small subunit methyltransferase C (Haemophilus influenzae (strain 86-028NP)).